We begin with the raw amino-acid sequence, 435 residues long: Trigger factor (435 aa).

In terms of domain architecture, PPIase FKBP-type spans Asp161–Pro246.

Belongs to the FKBP-type PPIase family. Tig subfamily.

The protein localises to the cytoplasm. It carries out the reaction [protein]-peptidylproline (omega=180) = [protein]-peptidylproline (omega=0). In terms of biological role, involved in protein export. Acts as a chaperone by maintaining the newly synthesized protein in an open conformation. Functions as a peptidyl-prolyl cis-trans isomerase. The polypeptide is Trigger factor (Psychromonas ingrahamii (strain DSM 17664 / CCUG 51855 / 37)).